We begin with the raw amino-acid sequence, 263 residues long: (R)-S-adenosyl-L-methionine hydrolase (263 aa).

Residues Asp-18, Asp-82, and Asn-181 each contribute to the adenosine site. Positions 181, 221, 234, 239, and 244 each coordinate (R)-S-adenosyl-L-methionine.

It belongs to the SAM hydrolase / SAM-dependent halogenase family. In terms of assembly, homotrimer.

The catalysed reaction is (R)-S-adenosyl-L-methionine + H2O = adenosine + L-methionine + H(+). Its function is as follows. Catalyzes the hydrolysis of S-adenosyl-L-methionine (SAM) into adenosine and L-methionine. Does not have chlorinase or fluorinase activity. The sequence is that of (R)-S-adenosyl-L-methionine hydrolase from Methanocaldococcus jannaschii (strain ATCC 43067 / DSM 2661 / JAL-1 / JCM 10045 / NBRC 100440) (Methanococcus jannaschii).